Consider the following 536-residue polypeptide: Multicopper oxidase CueO (536 aa).

The segment at residues 1–28 (MLRRDFLKYSVALGVASALPLWSRAAFA) is a signal peptide (tat-type signal). Plastocyanin-like domains lie at 53 to 165 (KAGQ…IEDD), 229 to 295 (GWLR…AFDL), and 424 to 536 (FHNA…GFTV). Residues histidine 101, histidine 103, histidine 141, and histidine 143 each coordinate Cu cation. Cu cation contacts are provided by histidine 463, histidine 466, histidine 468, histidine 519, cysteine 520, histidine 521, and histidine 525.

It belongs to the multicopper oxidase family. As to quaternary structure, monomer. Requires Cu cation as cofactor. Post-translationally, predicted to be exported by the Tat system. The position of the signal peptide cleavage has not been experimentally proven.

Its subcellular location is the periplasm. It catalyses the reaction 4 Cu(+) + O2 + 4 H(+) = 4 Cu(2+) + 2 H2O. In terms of biological role, multicopper oxidase involved in copper homeostasis and copper tolerance under both aerobic and anaerobic conditions. Is responsible for the oxidation of Cu(+) to the less harmful Cu(2+) in the periplasm, thereby preventing Cu(+) from entering the cytoplasm. The polypeptide is Multicopper oxidase CueO (cueO) (Salmonella typhimurium (strain LT2 / SGSC1412 / ATCC 700720)).